The sequence spans 513 residues: ATP synthase subunit alpha (513 aa).

ATP is bound at residue 171–178; sequence GDRQIGKT.

Belongs to the ATPase alpha/beta chains family. F-type ATPases have 2 components, CF(1) - the catalytic core - and CF(0) - the membrane proton channel. CF(1) has five subunits: alpha(3), beta(3), gamma(1), delta(1), epsilon(1). CF(0) has three main subunits: a(1), b(2) and c(9-12). The alpha and beta chains form an alternating ring which encloses part of the gamma chain. CF(1) is attached to CF(0) by a central stalk formed by the gamma and epsilon chains, while a peripheral stalk is formed by the delta and b chains.

Its subcellular location is the cell inner membrane. The enzyme catalyses ATP + H2O + 4 H(+)(in) = ADP + phosphate + 5 H(+)(out). In terms of biological role, produces ATP from ADP in the presence of a proton gradient across the membrane. The alpha chain is a regulatory subunit. This Wolbachia sp. subsp. Drosophila simulans (strain wRi) protein is ATP synthase subunit alpha.